The sequence spans 135 residues: Lymphocyte antigen 6 complex locus protein G6d (135 aa).

The N-terminal stretch at 1–19 (MNSQLVGILLSALLGVALG) is a signal peptide. A UPAR/Ly6 domain is found at 22-121 (TRCYDCGGGP…ASSVTPLCIL (100 aa)). Cystine bridges form between cysteine 24–cysteine 48, cysteine 27–cysteine 35, cysteine 42–cysteine 76, cysteine 82–cysteine 101, and cysteine 102–cysteine 107. O-linked (GalNAc...) threonine glycosylation occurs at threonine 68. Asparagine 108 is lipidated: GPI-anchor amidated asparagine. The propeptide at 109–135 (SAVASSVTPLCILAAAVTTLAWLLPGL) is removed in mature form.

As to quaternary structure, homodimer. Post-translationally, O-glycosylated. Expressed in embryonic tissue and adult lung, kidney, brain, liver and spleen.

The protein localises to the cell membrane. It is found in the cell projection. Its subcellular location is the filopodium. The protein is Lymphocyte antigen 6 complex locus protein G6d (Ly6g6d) of Mus musculus (Mouse).